The primary structure comprises 952 residues: Lysosomal alpha-glucosidase (952 aa).

Residues 1–27 (MRVRHPPCSRRLLAICALVSLATAALL) form the signal peptide. Residues 28–69 (GHILLHDFLLVPRELSGSSPVLEETHPAHQQGASRPGPRDAQ) constitute a propeptide that is removed on maturation. The interval 47 to 80 (PVLEETHPAHQQGASRPGPRDAQAHLGRPRAVPT) is disordered. Residues 80–131 (TQCDVPPNSRFDCAPDKAITREQCDARGCCYIPAKQGLRGAQMGQPWCFFPP) form the P-type domain. 3 disulfide bridges follow: Cys82–Cys109, Cys92–Cys108, and Cys103–Cys127. 3 N-linked (GlcNAc...) asparagine glycosylation sites follow: Asn140, Asn233, and Asn390. Asp404 serves as a coordination point for substrate. N-linked (GlcNAc...) asparagine glycosylation is present at Asn470. The active-site Nucleophile is the Asp518. Residue Glu521 is part of the active site. An intrachain disulfide couples Cys533 to Cys558. Residues Arg600 and Asp616 each coordinate substrate. An intrachain disulfide couples Cys647 to Cys658. The N-linked (GlcNAc...) asparagine glycan is linked to Asn652. His674 serves as a coordination point for substrate. N-linked (GlcNAc...) asparagine glycosylation is found at Asn882 and Asn925.

The protein belongs to the glycosyl hydrolase 31 family.

It is found in the lysosome. The protein resides in the lysosome membrane. It catalyses the reaction Hydrolysis of terminal, non-reducing (1-&gt;4)-linked alpha-D-glucose residues with release of alpha-D-glucose.. In terms of biological role, essential for the degradation of glycogen in lysosomes. Has highest activity on alpha-1,4-linked glycosidic linkages, but can also hydrolyze alpha-1,6-linked glucans. The protein is Lysosomal alpha-glucosidase (GAA) of Pongo abelii (Sumatran orangutan).